Here is a 308-residue protein sequence, read N- to C-terminus: Pyrroline-5-carboxylate reductase 3 (308 aa).

It belongs to the pyrroline-5-carboxylate reductase family. As to quaternary structure, homodecamer; composed of 5 homodimers.

The protein localises to the cytoplasm. It carries out the reaction L-proline + NADP(+) = (S)-1-pyrroline-5-carboxylate + NADPH + 2 H(+). The enzyme catalyses L-proline + NAD(+) = (S)-1-pyrroline-5-carboxylate + NADH + 2 H(+). Its pathway is amino-acid biosynthesis; L-proline biosynthesis; L-proline from L-glutamate 5-semialdehyde: step 1/1. In terms of biological role, oxidoreductase that catalyzes the last step in proline biosynthesis, which corresponds to the reduction of pyrroline-5-carboxylate (P5C) to L-proline using NAD(P)H. Proline is synthesized from either glutamate or ornithine; both are converted to P5C, and then to proline via pyrroline-5-carboxylate reductases (PYCRs). PYCR3 is exclusively linked to the biosynthesis of proline from ornithine. The protein is Pyrroline-5-carboxylate reductase 3 of Bos taurus (Bovine).